The chain runs to 423 residues: G protein-activated inward rectifier potassium channel 2 (423 aa).

Topologically, residues 1 to 89 (MAKLTESMTN…IFTTLVDLKW (89 aa)) are cytoplasmic. Phosphoserine is present on residues serine 16 and serine 23. The helical transmembrane segment at 90 to 114 (RFNLLIFVMVYTVTWLFFGMIWWLI) threads the bilayer. The Extracellular portion of the chain corresponds to 115–138 (AYIRGDMDHIEDPSWTPCVTNLNG). The helical; Pore-forming intramembrane region spans 139 to 150 (FVSAFLFSIETE). The segment at residues 151–157 (TTIGYGY) is an intramembrane region (pore-forming). Positions 152–157 (TIGYGY) match the Selectivity filter motif. At 158 to 166 (RVITDKCPE) the chain is on the extracellular side. Residues 167 to 188 (GIILLLIQSVLGSIVNAFMVGC) form a helical membrane-spanning segment. The Cytoplasmic segment spans residues 189–423 (MFVKISQPKK…VANLENESKV (235 aa)). The interval 390–423 (NQHAELETEEEEKNLEEQTERNGDVANLENESKV) is disordered. The PDZ-binding signature appears at 420–423 (ESKV).

Belongs to the inward rectifier-type potassium channel (TC 1.A.2.1) family. KCNJ6 subfamily. In terms of assembly, associates with KCNJ3/GIRK1 or KCNJ5/GRIK4 to form a G-protein-activated heteromultimer pore-forming unit. The resulting inward current is much larger. Interacts (via PDZ-binding motif) with SNX27 (via PDZ domain); the interaction is required when endocytosed to prevent degradation in lysosomes and promote recycling to the plasma membrane.

The protein localises to the membrane. The catalysed reaction is K(+)(in) = K(+)(out). Activated by phosphatidylinositol 4,5 biphosphate (PtdIns(4,5)P2). In terms of biological role, inward rectifier potassium channels are characterized by a greater tendency to allow potassium to flow into the cell rather than out of it. Their voltage dependence is regulated by the concentration of extracellular potassium; as external potassium is raised, the voltage range of the channel opening shifts to more positive voltages. The inward rectification is mainly due to the blockage of outward current by internal magnesium. This potassium channel may be involved in the regulation of insulin secretion by glucose and/or neurotransmitters acting through G-protein-coupled receptors. The chain is G protein-activated inward rectifier potassium channel 2 (KCNJ6) from Pongo abelii (Sumatran orangutan).